A 155-amino-acid polypeptide reads, in one-letter code: Small ribosomal subunit protein uS7 (155 aa).

Belongs to the universal ribosomal protein uS7 family. In terms of assembly, part of the 30S ribosomal subunit. Contacts proteins S9 and S11.

Its function is as follows. One of the primary rRNA binding proteins, it binds directly to 16S rRNA where it nucleates assembly of the head domain of the 30S subunit. Is located at the subunit interface close to the decoding center, probably blocks exit of the E-site tRNA. The chain is Small ribosomal subunit protein uS7 from Nautilia profundicola (strain ATCC BAA-1463 / DSM 18972 / AmH).